We begin with the raw amino-acid sequence, 388 residues long: UTP--glucose-1-phosphate uridylyltransferase (388 aa).

Mg(2+) is bound at residue D118.

Belongs to the CugP-type UDP-glucose pyrophosphorylase family. The cofactor is Mg(2+).

The catalysed reaction is alpha-D-glucose 1-phosphate + UTP + H(+) = UDP-alpha-D-glucose + diphosphate. Catalyzes the formation of UDP-glucose, from UTP and glucose 1-phosphate. Is highly specific since it cannot use other NTPs such as dTTP, CTP, ATP, and GTP, and other sugar-1P such as GlcNAc-1P, Gal-1P, and Man-1P, as substrates. Has probably a central and essential role as the substrate supplier for galactolipid synthesis; galactolipids are major constituents of the photosynthetic thylakoid membrane and important for photosynthetic activity. In Synechocystis sp. (strain ATCC 27184 / PCC 6803 / Kazusa), this protein is UTP--glucose-1-phosphate uridylyltransferase.